The chain runs to 453 residues: GTPase Der (453 aa).

EngA-type G domains lie at Pro-3–Lys-167 and Ile-187–Lys-360. GTP contacts are provided by residues Gly-9–Ser-16, Asp-57–Leu-61, Asn-119–Asp-122, Gly-193–Ser-200, Asp-240–Ala-244, and Asn-305–Asp-308. The region spanning Arg-361–Glu-445 is the KH-like domain.

This sequence belongs to the TRAFAC class TrmE-Era-EngA-EngB-Septin-like GTPase superfamily. EngA (Der) GTPase family. Associates with the 50S ribosomal subunit.

In terms of biological role, GTPase that plays an essential role in the late steps of ribosome biogenesis. The chain is GTPase Der from Buchnera aphidicola subsp. Acyrthosiphon pisum (strain Tuc7).